Here is a 423-residue protein sequence, read N- to C-terminus: Serine--tRNA ligase (423 aa).

L-serine is bound at residue 230–232 (TAE). Position 261-263 (261-263 (RSE)) interacts with ATP. Glu-284 contacts L-serine. 348–351 (EISS) serves as a coordination point for ATP. Residue Ser-384 participates in L-serine binding.

The protein belongs to the class-II aminoacyl-tRNA synthetase family. Type-1 seryl-tRNA synthetase subfamily. As to quaternary structure, homodimer. The tRNA molecule binds across the dimer.

It is found in the cytoplasm. The enzyme catalyses tRNA(Ser) + L-serine + ATP = L-seryl-tRNA(Ser) + AMP + diphosphate + H(+). It catalyses the reaction tRNA(Sec) + L-serine + ATP = L-seryl-tRNA(Sec) + AMP + diphosphate + H(+). The protein operates within aminoacyl-tRNA biosynthesis; selenocysteinyl-tRNA(Sec) biosynthesis; L-seryl-tRNA(Sec) from L-serine and tRNA(Sec): step 1/1. Catalyzes the attachment of serine to tRNA(Ser). Is also able to aminoacylate tRNA(Sec) with serine, to form the misacylated tRNA L-seryl-tRNA(Sec), which will be further converted into selenocysteinyl-tRNA(Sec). The sequence is that of Serine--tRNA ligase from Syntrophobacter fumaroxidans (strain DSM 10017 / MPOB).